Here is a 169-residue protein sequence, read N- to C-terminus: Crossover junction endodeoxyribonuclease RuvC (169 aa).

Active-site residues include D11, E71, and D143. 3 residues coordinate Mg(2+): D11, E71, and D143.

It belongs to the RuvC family. Homodimer which binds Holliday junction (HJ) DNA. The HJ becomes 2-fold symmetrical on binding to RuvC with unstacked arms; it has a different conformation from HJ DNA in complex with RuvA. In the full resolvosome a probable DNA-RuvA(4)-RuvB(12)-RuvC(2) complex forms which resolves the HJ. It depends on Mg(2+) as a cofactor.

It localises to the cytoplasm. The catalysed reaction is Endonucleolytic cleavage at a junction such as a reciprocal single-stranded crossover between two homologous DNA duplexes (Holliday junction).. Functionally, the RuvA-RuvB-RuvC complex processes Holliday junction (HJ) DNA during genetic recombination and DNA repair. Endonuclease that resolves HJ intermediates. Cleaves cruciform DNA by making single-stranded nicks across the HJ at symmetrical positions within the homologous arms, yielding a 5'-phosphate and a 3'-hydroxyl group; requires a central core of homology in the junction. The consensus cleavage sequence is 5'-(A/T)TT(C/G)-3'. Cleavage occurs on the 3'-side of the TT dinucleotide at the point of strand exchange. HJ branch migration catalyzed by RuvA-RuvB allows RuvC to scan DNA until it finds its consensus sequence, where it cleaves and resolves the cruciform DNA. The chain is Crossover junction endodeoxyribonuclease RuvC from Bartonella henselae (strain ATCC 49882 / DSM 28221 / CCUG 30454 / Houston 1) (Rochalimaea henselae).